A 192-amino-acid polypeptide reads, in one-letter code: Shikimate kinase (192 aa).

Residue 26–31 participates in ATP binding; sequence ASGKSS. Ser30 provides a ligand contact to Mg(2+). Asp48, Arg72, and Gly94 together coordinate substrate. Arg132 contributes to the ATP binding site. Substrate is bound at residue Arg151.

The protein belongs to the shikimate kinase family. Monomer. It depends on Mg(2+) as a cofactor.

It is found in the cytoplasm. It carries out the reaction shikimate + ATP = 3-phosphoshikimate + ADP + H(+). It participates in metabolic intermediate biosynthesis; chorismate biosynthesis; chorismate from D-erythrose 4-phosphate and phosphoenolpyruvate: step 5/7. In terms of biological role, catalyzes the specific phosphorylation of the 3-hydroxyl group of shikimic acid using ATP as a cosubstrate. The sequence is that of Shikimate kinase from Prochlorococcus marinus (strain MIT 9313).